The primary structure comprises 251 residues: Ubiquinone/menaquinone biosynthesis C-methyltransferase UbiE (251 aa).

Residues T74, D95, 123 to 124 (NA), and S140 each bind S-adenosyl-L-methionine.

The protein belongs to the class I-like SAM-binding methyltransferase superfamily. MenG/UbiE family.

It carries out the reaction a 2-demethylmenaquinol + S-adenosyl-L-methionine = a menaquinol + S-adenosyl-L-homocysteine + H(+). It catalyses the reaction a 2-methoxy-6-(all-trans-polyprenyl)benzene-1,4-diol + S-adenosyl-L-methionine = a 5-methoxy-2-methyl-3-(all-trans-polyprenyl)benzene-1,4-diol + S-adenosyl-L-homocysteine + H(+). It functions in the pathway quinol/quinone metabolism; menaquinone biosynthesis; menaquinol from 1,4-dihydroxy-2-naphthoate: step 2/2. The protein operates within cofactor biosynthesis; ubiquinone biosynthesis. In terms of biological role, methyltransferase required for the conversion of demethylmenaquinol (DMKH2) to menaquinol (MKH2) and the conversion of 2-polyprenyl-6-methoxy-1,4-benzoquinol (DDMQH2) to 2-polyprenyl-3-methyl-6-methoxy-1,4-benzoquinol (DMQH2). This Yersinia enterocolitica serotype O:8 / biotype 1B (strain NCTC 13174 / 8081) protein is Ubiquinone/menaquinone biosynthesis C-methyltransferase UbiE.